A 332-amino-acid polypeptide reads, in one-letter code: Biotin synthase (332 aa).

One can recognise a Radical SAM core domain in the interval 46 to 275 (SDIQRASLLS…RARVRLSAGR (230 aa)). C61, C65, and C68 together coordinate [4Fe-4S] cluster. [2Fe-2S] cluster contacts are provided by C106, C138, C198, and R270.

The protein belongs to the radical SAM superfamily. Biotin synthase family. Homodimer. [4Fe-4S] cluster serves as cofactor. The cofactor is [2Fe-2S] cluster.

It carries out the reaction (4R,5S)-dethiobiotin + (sulfur carrier)-SH + 2 reduced [2Fe-2S]-[ferredoxin] + 2 S-adenosyl-L-methionine = (sulfur carrier)-H + biotin + 2 5'-deoxyadenosine + 2 L-methionine + 2 oxidized [2Fe-2S]-[ferredoxin]. Its pathway is cofactor biosynthesis; biotin biosynthesis; biotin from 7,8-diaminononanoate: step 2/2. Functionally, catalyzes the conversion of dethiobiotin (DTB) to biotin by the insertion of a sulfur atom into dethiobiotin via a radical-based mechanism. This chain is Biotin synthase, found in Methylobacterium sp. (strain 4-46).